Here is a 124-residue protein sequence, read N- to C-terminus: Fluoride-specific ion channel FluC (124 aa).

4 consecutive transmembrane segments (helical) span residues I5–W25, T38–L58, G69–L89, and A97–A117. Na(+) contacts are provided by G76 and T79.

Belongs to the fluoride channel Fluc/FEX (TC 1.A.43) family.

Its subcellular location is the cell inner membrane. It carries out the reaction fluoride(in) = fluoride(out). With respect to regulation, na(+) is not transported, but it plays an essential structural role and its presence is essential for fluoride channel function. In terms of biological role, fluoride-specific ion channel. Important for reducing fluoride concentration in the cell, thus reducing its toxicity. This is Fluoride-specific ion channel FluC from Pseudomonas fluorescens (strain SBW25).